The sequence spans 121 residues: Small ribosomal subunit protein uS13 (121 aa).

Residues 97–121 (VRGQRTRTNARTRRGARKTVAGKKK) form a disordered region. Positions 100-121 (QRTRTNARTRRGARKTVAGKKK) are enriched in basic residues.

It belongs to the universal ribosomal protein uS13 family. As to quaternary structure, part of the 30S ribosomal subunit. Forms a loose heterodimer with protein S19. Forms two bridges to the 50S subunit in the 70S ribosome.

In terms of biological role, located at the top of the head of the 30S subunit, it contacts several helices of the 16S rRNA. In the 70S ribosome it contacts the 23S rRNA (bridge B1a) and protein L5 of the 50S subunit (bridge B1b), connecting the 2 subunits; these bridges are implicated in subunit movement. Contacts the tRNAs in the A and P-sites. This is Small ribosomal subunit protein uS13 from Parasynechococcus marenigrum (strain WH8102).